Here is a 1408-residue protein sequence, read N- to C-terminus: ABC multidrug transporter MDR1 (1408 aa).

Residues 1–13 (MSASPSPIGAAAG) are compositionally biased toward low complexity. Positions 1–103 (MSASPSPIGA…SISSAVPKSH (103 aa)) are disordered. Basic and acidic residues predominate over residues 17–38 (LQARRDEEVVDSEKDALAHDSH). The next 2 helical transmembrane spans lie at 147–167 (FAAP…IAAG) and 223–243 (LYLM…MFIW). Residues 157–464 (VFGLLLAIAA…LAPELAAVTK (308 aa)) form the ABC transmembrane type-1 1 domain. A glycan (N-linked (GlcNAc...) asparagine) is linked at asparagine 244. Transmembrane regions (helical) follow at residues 296–316 (KVAL…LAFV), 321–341 (LAGA…IMMT), 408–428 (IMFF…GILV), and 436–456 (GIVI…AMLA). Residues 499–744 (ISFENVRFHY…ENGPYAQLVN (246 aa)) enclose the ABC transporter 1 domain. Residue 534 to 541 (GASGSGKS) coordinates ATP. Helical transmembrane passes span 838 to 858 (IFAF…AILF) and 882 to 902 (LWYF…SAGF). An ABC transmembrane type-1 2 domain is found at 838–1125 (IFAFIAAICA…VFTFVPDASK (288 aa)). Residue asparagine 934 is glycosylated (N-linked (GlcNAc...) asparagine). The next 4 membrane-spanning stretches (helical) occupy residues 952 to 972 (GLFG…IGGC), 973 to 993 (IIGL…IPIL), 1072 to 1092 (GLTF…IIDG), and 1099 to 1119 (FYTV…VFTF). 2 N-linked (GlcNAc...) asparagine glycosylation sites follow: asparagine 1127 and asparagine 1182. Residues 1162–1402 (VRIEGVHFRY…KGGYYDLVQM (241 aa)) enclose the ABC transporter 2 domain. ATP is bound at residue 1197–1204 (GPSGCGKS). Asparagine 1404 carries an N-linked (GlcNAc...) asparagine glycan.

This sequence belongs to the ABC transporter superfamily. ABCB family. Multidrug resistance exporter (TC 3.A.1.201) subfamily.

Its subcellular location is the cell membrane. The catalysed reaction is itraconazole(in) + ATP + H2O = itraconazole(out) + ADP + phosphate + H(+). It catalyses the reaction voriconazole(in) + ATP + H2O = voriconazole(out) + ADP + phosphate + H(+). It carries out the reaction fluconazole(in) + ATP + H2O = fluconazole(out) + ADP + phosphate + H(+). In terms of biological role, pleiotropic ABC efflux transporter that confers resistance to structurally and functionally unrelated compounds including azoles such as fluconazole (FLC), itraconazole (ITC), posaconazole (POS), nocodazole and voriconazole (VRC). The polypeptide is ABC multidrug transporter MDR1 (Cryptococcus deuterogattii (strain R265) (Cryptococcus gattii VGII (strain R265))).